A 79-amino-acid chain; its full sequence is Conotoxin ArMSGL-0121 (79 aa).

Positions 1 to 20 are cleaved as a signal peptide; it reads MSRLGIMVLTLLLLVFIVTS. A propeptide spanning residues 21-44 is cleaved from the precursor; that stretch reads HQDAGEKQATQRNAINFRWRRSFT. 3 cysteine pairs are disulfide-bonded: Cys52–Cys64, Cys56–Cys73, and Cys63–Cys77. Leu78 is subject to Leucine amide.

This sequence belongs to the conotoxin O3 superfamily. As to expression, expressed by the venom duct.

It localises to the secreted. This is Conotoxin ArMSGL-0121 from Conus arenatus (Sand-dusted cone).